The following is a 413-amino-acid chain: cAMP-dependent protein kinase regulatory subunit (413 aa).

The tract at residues 1 to 145 is disordered; that stretch reads MADSSSFPGT…DSWTPPCHPK (145 aa). Residues 24 to 161 are dimerization and phosphorylation; it reads SPIQKISEEE…RLKTAVSNNF (138 aa). Residues 58 to 67 show a composition bias toward low complexity; that stretch reads GNSFNGDNGS. A compositionally biased stretch (polar residues) spans 121 to 138; it reads TSVSAESLNPTSAGSDSW. Position 122 is a phosphoserine (Ser122). 3',5'-cyclic AMP-binding positions include 162 to 291, Glu240, Arg249, 294 to 413, Glu361, and Arg370; these read LFSH…FLEE and LLSS…PSPS.

Belongs to the cAMP-dependent kinase regulatory chain family. Tetramer, composed of 2 regulatory (R) and 2 catalytic (C) subunits. In the presence of cAMP it dissociates into 2 active monomeric C subunits and an R dimer.

The protein is cAMP-dependent protein kinase regulatory subunit (pkaR) of Aspergillus fumigatus (strain ATCC MYA-4609 / CBS 101355 / FGSC A1100 / Af293) (Neosartorya fumigata).